The primary structure comprises 137 residues: Small ribosomal subunit protein uS12 (137 aa).

Disordered regions lie at residues 1-21 (MPTI…KSDS) and 34-57 (VHTK…TPKK). Position 102 is a 3-methylthioaspartic acid (aspartate 102).

The protein belongs to the universal ribosomal protein uS12 family. Part of the 30S ribosomal subunit. Contacts proteins S8 and S17. May interact with IF1 in the 30S initiation complex.

In terms of biological role, with S4 and S5 plays an important role in translational accuracy. Its function is as follows. Interacts with and stabilizes bases of the 16S rRNA that are involved in tRNA selection in the A site and with the mRNA backbone. Located at the interface of the 30S and 50S subunits, it traverses the body of the 30S subunit contacting proteins on the other side and probably holding the rRNA structure together. The combined cluster of proteins S8, S12 and S17 appears to hold together the shoulder and platform of the 30S subunit. The sequence is that of Small ribosomal subunit protein uS12 from Streptococcus uberis (strain ATCC BAA-854 / 0140J).